The following is a 513-amino-acid chain: GMP synthase [glutamine-hydrolyzing] (513 aa).

Residues 8 to 198 form the Glutamine amidotransferase type-1 domain; it reads KIIVLDYGSQ…ALNICGAKGN (191 aa). The active-site Nucleophile is the Cys85. Residues His172 and Glu174 contribute to the active site. The GMPS ATP-PPase domain occupies 199–388; it reads WSMENFIDMQ…LGMPDEIVWR (190 aa). Residue 226 to 232 coordinates ATP; the sequence is SGGVDSS.

In terms of assembly, homodimer.

The catalysed reaction is XMP + L-glutamine + ATP + H2O = GMP + L-glutamate + AMP + diphosphate + 2 H(+). The protein operates within purine metabolism; GMP biosynthesis; GMP from XMP (L-Gln route): step 1/1. Catalyzes the synthesis of GMP from XMP. This Lactococcus lactis subsp. cremoris (strain MG1363) protein is GMP synthase [glutamine-hydrolyzing] (guaA).